A 312-amino-acid polypeptide reads, in one-letter code: Olfactory receptor 1F1 (312 aa).

Topologically, residues methionine 1–histidine 25 are extracellular. The N-linked (GlcNAc...) asparagine glycan is linked to asparagine 5. The chain crosses the membrane as a helical span at residues leucine 26 to valine 49. At serine 50 to threonine 57 the chain is on the cytoplasmic side. The helical transmembrane segment at proline 58 to proline 79 threads the bilayer. At lysine 80–glutamine 100 the chain is on the extracellular side. Residues cysteine 97 and cysteine 189 are joined by a disulfide bond. Residues methionine 101 to tyrosine 120 form a helical membrane-spanning segment. The Cytoplasmic segment spans residues aspartate 121–glutamine 139. Residues leucine 140–leucine 158 traverse the membrane as a helical segment. The Extracellular portion of the chain corresponds to histidine 159–glutamate 196. Residues valine 197–methionine 219 traverse the membrane as a helical segment. Residues histidine 220–lysine 236 lie on the Cytoplasmic side of the membrane. A helical transmembrane segment spans residues alanine 237 to tyrosine 259. Over phenylalanine 260 to threonine 272 the chain is Extracellular. A helical transmembrane segment spans residues methionine 273–leucine 292. Over arginine 293–valine 312 the chain is Cytoplasmic.

The protein belongs to the G-protein coupled receptor 1 family.

It is found in the cell membrane. Odorant receptor. In Homo sapiens (Human), this protein is Olfactory receptor 1F1 (OR1F1).